Consider the following 628-residue polypeptide: Phosphomethylpyrimidine synthase (628 aa).

Substrate-binding positions include Asn229, Met258, Tyr287, His323, 343–345 (SRG), 384–387 (DGLR), and Glu423. Residue His427 participates in Zn(2+) binding. Tyr450 contacts substrate. A Zn(2+)-binding site is contributed by His491. [4Fe-4S] cluster contacts are provided by Cys571, Cys574, and Cys579.

Belongs to the ThiC family. Homodimer. [4Fe-4S] cluster is required as a cofactor.

The enzyme catalyses 5-amino-1-(5-phospho-beta-D-ribosyl)imidazole + S-adenosyl-L-methionine = 4-amino-2-methyl-5-(phosphooxymethyl)pyrimidine + CO + 5'-deoxyadenosine + formate + L-methionine + 3 H(+). It functions in the pathway cofactor biosynthesis; thiamine diphosphate biosynthesis. Its function is as follows. Catalyzes the synthesis of the hydroxymethylpyrimidine phosphate (HMP-P) moiety of thiamine from aminoimidazole ribotide (AIR) in a radical S-adenosyl-L-methionine (SAM)-dependent reaction. This chain is Phosphomethylpyrimidine synthase, found in Variovorax paradoxus (strain S110).